A 98-amino-acid polypeptide reads, in one-letter code: PqqA binding protein (98 aa).

Belongs to the PqqD family. In terms of assembly, monomer. Interacts with PqqE.

The protein operates within cofactor biosynthesis; pyrroloquinoline quinone biosynthesis. Functionally, functions as a PqqA binding protein and presents PqqA to PqqE, in the pyrroloquinoline quinone (PQQ) biosynthetic pathway. The chain is PqqA binding protein from Pseudomonas syringae pv. tomato (strain ATCC BAA-871 / DC3000).